A 205-amino-acid chain; its full sequence is Octanoyltransferase (205 aa).

One can recognise a BPL/LPL catalytic domain in the interval 29 to 204 (AETPDEIWIV…HLLQQLDQKN (176 aa)). Residues 68–75 (RGGQVTYH), 135–137 (ALG), and 148–150 (GVS) contribute to the substrate site. The active-site Acyl-thioester intermediate is the Cys166.

Belongs to the LipB family.

It is found in the cytoplasm. The enzyme catalyses octanoyl-[ACP] + L-lysyl-[protein] = N(6)-octanoyl-L-lysyl-[protein] + holo-[ACP] + H(+). It participates in protein modification; protein lipoylation via endogenous pathway; protein N(6)-(lipoyl)lysine from octanoyl-[acyl-carrier-protein]: step 1/2. In terms of biological role, catalyzes the transfer of endogenously produced octanoic acid from octanoyl-acyl-carrier-protein onto the lipoyl domains of lipoate-dependent enzymes. Lipoyl-ACP can also act as a substrate although octanoyl-ACP is likely to be the physiological substrate. The chain is Octanoyltransferase from Dechloromonas aromatica (strain RCB).